The chain runs to 545 residues: RAN GTPase-activating protein 2 (545 aa).

Positions 1–116 (MADILDSRPH…VAARELISED (116 aa)) are WPP. LRR repeat units lie at residues 213–236 (GSIL…AFGA), 241–264 (LSSL…AVSE), 269–296 (TENL…VVKR), 325–348 (CTHM…SLSK), 353–380 (FKHM…ALKE), 382–405 (ASPI…AIAA), 410–433 (KQDL…QIAN), 439–462 (HSKL…ALAH), and 467–494 (KEAF…IFKK). Residues 496–545 (PELLGALDENDPDGEEDDDDEEDEEDEENEGNGNGELESKLKNLEVNQED) are disordered. The segment covering 503-525 (DENDPDGEEDDDDEEDEEDEENE) has biased composition (acidic residues).

It belongs to the RNA1 family. Homodimer. Interacts with WIP1 and WIP2 through its WPP domain. Component of Ran complexes at least composed of WIT1 or WIT2, RANGAP1 or RANGAP2, and WIP1 or WIP2 or WIP3. Interacts with WIT1.

The protein localises to the cytoplasm. The protein resides in the nucleus membrane. It is found in the cytoskeleton. It localises to the spindle. Its subcellular location is the phragmoplast. In terms of biological role, GTPase activator for the nuclear Ras-related regulatory protein Ran, converting it to the putatively inactive GDP-bound state. This is RAN GTPase-activating protein 2 (RANGAP2) from Arabidopsis thaliana (Mouse-ear cress).